Reading from the N-terminus, the 535-residue chain is Succinate-semialdehyde dehydrogenase, mitochondrial (535 aa).

The N-terminal 47 residues, 1–47 (MATCIWLRSCGARRLGSTFPGCRLRPRAGGLVPASGPAPGPAQLRCY), are a transit peptide targeting the mitochondrion. Lys-126 is modified (N6-acetyllysine; alternate). Lys-126 carries the N6-succinyllysine; alternate modification. N6-succinyllysine occurs at positions 135 and 184. Residue 202 to 204 (TPW) coordinates NAD(+). Arg-213 lines the substrate pocket. Residue 228 to 231 (KPAE) coordinates NAD(+). Lys-265 is modified (N6-acetyllysine; alternate). At Lys-265 the chain carries N6-succinyllysine; alternate. NAD(+) is bound by residues 284 to 289 (GSTTTG) and Glu-306. Residue Glu-306 is the Proton acceptor of the active site. Arg-334 serves as a coordination point for substrate. The active-site Nucleophile is the Cys-340. Residues Cys-340 and Cys-342 are joined by a disulfide bond. An N6-acetyllysine modification is found at Lys-365. N6-succinyllysine is present on Lys-402. Lys-411 carries the N6-acetyllysine modification. 438-440 (ETF) serves as a coordination point for NAD(+). Ser-498 is a substrate binding site. Residue Ser-499 is modified to Phosphoserine.

The protein belongs to the aldehyde dehydrogenase family. Homotetramer. Brain, pancreas, heart, liver, skeletal muscle and kidney. Lower in placenta.

It localises to the mitochondrion. It catalyses the reaction succinate semialdehyde + NAD(+) + H2O = succinate + NADH + 2 H(+). The protein operates within amino-acid degradation; 4-aminobutanoate degradation. With respect to regulation, redox-regulated. Inhibited under oxydizing conditions. Inhibited by hydrogen peroxide H(2)O(2). Catalyzes one step in the degradation of the inhibitory neurotransmitter gamma-aminobutyric acid (GABA). The polypeptide is Succinate-semialdehyde dehydrogenase, mitochondrial (Homo sapiens (Human)).